The chain runs to 151 residues: MSRELIVSKIRSGTVIDHIPAGRALAVLRILGITGKEGVRIALVMNVESKKLGKKDIIKIEDRELTPEEVNIISAVAPTATINIIEDFRVVRKFKVTPPEVIRGKFKCRNPTCITNAPREPVEPTFYLVRREPPLFICAYCGRYHELSDLI.

Residues Cys-108, Cys-113, Cys-138, and Cys-141 each coordinate Zn(2+).

It belongs to the PyrI family. Contains catalytic and regulatory chains. The cofactor is Zn(2+).

Its function is as follows. Involved in allosteric regulation of aspartate carbamoyltransferase. This Pyrobaculum islandicum (strain DSM 4184 / JCM 9189 / GEO3) protein is Aspartate carbamoyltransferase regulatory chain.